A 258-amino-acid polypeptide reads, in one-letter code: 4,5-dihydroxyphthalate decarboxylase (258 aa).

It to P.testosteroni DHP decarboxylase.

The enzyme catalyses 4,5-dihydroxyphthalate + H(+) = 3,4-dihydroxybenzoate + CO2. Its pathway is xenobiotic degradation; phthalate degradation; 3,4-dihydroxybenzoate from phthalate: step 3/3. This is 4,5-dihydroxyphthalate decarboxylase (pht5) from Pseudomonas putida (Arthrobacter siderocapsulatus).